The sequence spans 433 residues: Alpha-(1,3)-fucosyltransferase 4 (433 aa).

Topologically, residues 1–52 (MAPARQELQHESRCRPSRTVDAWRAAVATRGRHMETPGYRRRTRCGGWGLPR) are cytoplasmic. A helical; Signal-anchor for type II membrane protein membrane pass occupies residues 53–74 (SVSSLAAVGLLCTALTTFICWG). The Lumenal portion of the chain corresponds to 75 to 433 (QLPPLPWASP…IHNLADWFQR (359 aa)). Asn117 and Asn218 each carry an N-linked (GlcNAc...) asparagine glycan.

Belongs to the glycosyltransferase 10 family. Highest expression in stomach and colon. It is also expressed in the lung, testis, uterus, small intestine and to a lesser extent in spleen, and ovary. Present in trace amounts in brain, thymus, heart, smooth muscle, kidney and bone marrow. Not found in liver, salivary gland and pancreas.

Its subcellular location is the golgi apparatus. It localises to the golgi stack membrane. The catalysed reaction is a beta-D-galactosyl-(1-&gt;4)-N-acetyl-beta-D-glucosaminyl derivative + GDP-beta-L-fucose = a beta-D-galactosyl-(1-&gt;4)-[alpha-L-fucosyl-(1-&gt;3)]-N-acetyl-beta-D-glucosaminyl derivative + GDP + H(+). The enzyme catalyses an N-acetyl-alpha-neuraminyl-(2-&gt;3)-beta-D-galactosyl-(1-&gt;4)-N-acetyl-beta-D-glucosaminyl derivative + GDP-beta-L-fucose = an alpha-Neu5Ac-(2-&gt;3)-beta-D-Gal-(1-&gt;4)-[alpha-L-Fuc-(1-&gt;3)]-beta-D-GlcNAc derivative + GDP + H(+). It catalyses the reaction an alpha-Neu5Ac-(2-&gt;3)-beta-D-Gal-(1-&gt;4)-beta-D-GlcNAc-(1-&gt;3)-beta-D-Gal-(1-&gt;4)-beta-D-GlcNAc derivative + GDP-beta-L-fucose = an alpha-Neu5Ac-(2-&gt;3)-beta-D-Gal-(1-&gt;4)-beta-D-GlcNAc-(1-&gt;3)-beta-D-Gal-(1-&gt;4)-[alpha-L-Fuc-(1-&gt;3)]-beta-D-GlcNAc derivative + GDP + H(+). It carries out the reaction an alpha-Neu5Ac-(2-&gt;3)-beta-D-Gal-(1-&gt;4)-beta-D-GlcNAc6S derivative + GDP-beta-L-fucose = an alpha-Neu5Ac-(2-&gt;3)-beta-D-Gal-(1-&gt;4)-[alpha-L-Fuc-(1-&gt;3)]-beta-D-GlcNAc6S derivative + GDP + H(+). Its pathway is protein modification; protein glycosylation. Functionally, catalyzes alpha(1-&gt;3) linkage of fucosyl moiety transferred from GDP-beta-L-fucose to N-acetyl glucosamine (GlcNAc) within type 2 lactosamine (LacNAc, Gal-beta(1-&gt;4)GlcNAc) glycan attached to N- or O-linked glycoproteins. Robustly fucosylates nonsialylated distal LacNAc unit of the polylactosamine chain to form Lewis X antigen (CD15), a glycan determinant known to mediate important cellular functions in development and immunity. Fucosylates with lower efficiency sialylated LacNAc acceptors to form sialyl Lewis X and 6-sulfo sialyl Lewis X determinants that serve as recognition epitopes for C-type lectins. Together with FUT7 contributes to SELE, SELL and SELP selectin ligand biosynthesis and selectin-dependent lymphocyte homing, leukocyte migration and blood leukocyte homeostasis. In a cell type specific manner, may also fucosylate the internal LacNAc unit of the polylactosamine chain to form VIM-2 antigen that serves as recognition epitope for SELE. This is Alpha-(1,3)-fucosyltransferase 4 (Fut4) from Mus musculus (Mouse).